Here is a 488-residue protein sequence, read N- to C-terminus: Cobyric acid synthase (488 aa).

The GATase cobBQ-type domain maps to 254–442 (KFKIVVPVLP…VHGLFGMDTQ (189 aa)). The active-site Nucleophile is the C336. H434 is a catalytic residue.

The protein belongs to the CobB/CobQ family. CobQ subfamily.

It functions in the pathway cofactor biosynthesis; adenosylcobalamin biosynthesis. Catalyzes amidations at positions B, D, E, and G on adenosylcobyrinic A,C-diamide. NH(2) groups are provided by glutamine, and one molecule of ATP is hydrogenolyzed for each amidation. This Beijerinckia indica subsp. indica (strain ATCC 9039 / DSM 1715 / NCIMB 8712) protein is Cobyric acid synthase.